The chain runs to 510 residues: Thermostable carboxypeptidase 1 (510 aa).

One can recognise a Peptidase M32 domain in the interval 3-506; it reads PEAAYQNLLE…FLAYLEKKYA (504 aa). The HPF motif lies at 245 to 247; that stretch reads HPF. The DXRXT motif lies at 255–259; the sequence is DVRIT. H276 is a binding site for Zn(2+). The HEXXH motif lies at 276-280; sequence HEMGH. The Proton donor/acceptor role is filled by E277. 2 residues coordinate Zn(2+): H280 and E306. An HES/GQ motif is present at residues 305 to 308; it reads HESQ. The short motif at 357-362 is the I/NRXXA/SD element; the sequence is IRVEAD. A GXXQDXHW motif is present at residues 412 to 419; that stretch reads GVMQDVHW.

This sequence belongs to the peptidase M32 family. In terms of assembly, homodimer. Requires Zn(2+) as cofactor.

The catalysed reaction is Release of a C-terminal amino acid with broad specificity, except for -Pro.. Its function is as follows. Broad specificity carboxypetidase that releases amino acids sequentially from the C-terminus, including neutral, aromatic, polar and basic residues, but not Pro. Has lower activity with substrates ending with Gly or Glu. The chain is Thermostable carboxypeptidase 1 from Thermus thermophilus (strain ATCC 27634 / DSM 579 / HB8).